A 492-amino-acid chain; its full sequence is Ribose import ATP-binding protein RbsA (492 aa).

ABC transporter domains follow at residues 3-239 (IEMK…VGRS) and 249-492 (AEIR…TGGK). Residue 35 to 42 (GENGAGKS) coordinates ATP.

This sequence belongs to the ABC transporter superfamily. Ribose importer (TC 3.A.1.2.1) family. The complex is composed of an ATP-binding protein (RbsA), two transmembrane proteins (RbsC) and a solute-binding protein (RbsB).

It localises to the cell membrane. The enzyme catalyses D-ribose(out) + ATP + H2O = D-ribose(in) + ADP + phosphate + H(+). In terms of biological role, part of the ABC transporter complex RbsABC involved in ribose import. Responsible for energy coupling to the transport system. The chain is Ribose import ATP-binding protein RbsA from Lactococcus lactis subsp. cremoris (strain SK11).